Reading from the N-terminus, the 122-residue chain is Large ribosomal subunit protein uL14 (122 aa).

It belongs to the universal ribosomal protein uL14 family. As to quaternary structure, part of the 50S ribosomal subunit. Forms a cluster with proteins L3 and L19. In the 70S ribosome, L14 and L19 interact and together make contacts with the 16S rRNA in bridges B5 and B8.

Its function is as follows. Binds to 23S rRNA. Forms part of two intersubunit bridges in the 70S ribosome. The protein is Large ribosomal subunit protein uL14 of Agrobacterium fabrum (strain C58 / ATCC 33970) (Agrobacterium tumefaciens (strain C58)).